The chain runs to 227 residues: Uracil-DNA glycosylase (227 aa).

Asp64 serves as the catalytic Proton acceptor.

This sequence belongs to the uracil-DNA glycosylase (UDG) superfamily. UNG family.

Its subcellular location is the cytoplasm. The enzyme catalyses Hydrolyzes single-stranded DNA or mismatched double-stranded DNA and polynucleotides, releasing free uracil.. In terms of biological role, excises uracil residues from the DNA which can arise as a result of misincorporation of dUMP residues by DNA polymerase or due to deamination of cytosine. This chain is Uracil-DNA glycosylase, found in Alkaliphilus metalliredigens (strain QYMF).